Reading from the N-terminus, the 225-residue chain is tRNA (guanine-N(1)-)-methyltransferase (225 aa).

S-adenosyl-L-methionine is bound by residues Gly112 and 132-137 (IGDYVL).

This sequence belongs to the RNA methyltransferase TrmD family. As to quaternary structure, homodimer.

It is found in the cytoplasm. It catalyses the reaction guanosine(37) in tRNA + S-adenosyl-L-methionine = N(1)-methylguanosine(37) in tRNA + S-adenosyl-L-homocysteine + H(+). Its function is as follows. Specifically methylates guanosine-37 in various tRNAs. The protein is tRNA (guanine-N(1)-)-methyltransferase of Bacteroides fragilis (strain ATCC 25285 / DSM 2151 / CCUG 4856 / JCM 11019 / LMG 10263 / NCTC 9343 / Onslow / VPI 2553 / EN-2).